Here is a 478-residue protein sequence, read N- to C-terminus: Zinc finger protein 410 (478 aa).

Disordered stretches follow at residues 84–113 and 187–214; these read PDGE…LQDL and NAKT…PLPQ. Residues 103–113 show a composition bias toward polar residues; it reads TPESPSLLQDL. 5 consecutive C2H2-type zinc fingers follow at residues 219-243, 249-273, 279-303, 309-333, and 339-362; these read LKCT…LKTH, FICP…MRTH, FMCH…RRIH, FLCE…LVVH, and HQCQ…RKHH. Residues cysteine 221, cysteine 226, histidine 239, histidine 243, cysteine 251, cysteine 256, histidine 269, histidine 273, cysteine 281, cysteine 286, histidine 299, histidine 303, cysteine 311, cysteine 316, histidine 329, histidine 333, cysteine 341, cysteine 344, histidine 357, and histidine 361 each coordinate Zn(2+).

As to quaternary structure, interacts with CDKN2A/p14ARF. Post-translationally, O-glycosylated. O-GlcNAcylation may occur in response to increasing glucose levels and affect transcription factor activity. Sumoylated. Sumoylation increases its half-life, possibly by blocking ubiquitin-mediated degradation.

It localises to the nucleus. The protein resides in the chromosome. Functionally, transcription factor that binds to the sequence motif 5'-CATCCCATAATA-3', and is specifically required to silence expression of fetal hemoglobin in adult erythroid cells. Prevents expression of fetal hemoglobin genes HBG1 and HBG2 through CHD4: acts as a direct transcriptional activator of CHD4, a central component of the NuRD complex that represses transcription of fetal hemoglobin genes HBG1 and HBG2 in erythroid cells. May also activate transcription of matrix-remodeling genes such as MMP1 during fibroblast senescence. May activate transcription of the gap junction gene GJC1, perhaps in response to increasing glucose. However, recent studies suggest that ZNF410 is dedicated to regulate expression of a single gene: CHD4. The polypeptide is Zinc finger protein 410 (Mus musculus (Mouse)).